A 315-amino-acid polypeptide reads, in one-letter code: Cytochrome f (315 aa).

The N-terminal stretch at 1–36 (MKQSLLSVLTKKSLRLLAALFLVVTSVFSLPQAAQA) is a signal peptide. Residues Phe37, Cys57, Cys60, and His61 each coordinate heme. Residues 281–301 (IKWLMVFFSAIMISQTLLVLK) form a helical membrane-spanning segment.

The protein belongs to the cytochrome f family. In terms of assembly, the 4 large subunits of the cytochrome b6-f complex are cytochrome b6, subunit IV (17 kDa polypeptide, PetD), cytochrome f and the Rieske protein, while the 4 small subunits are PetG, PetL, PetM and PetN. The complex functions as a dimer. Heme is required as a cofactor.

The protein resides in the cellular thylakoid membrane. In terms of biological role, component of the cytochrome b6-f complex, which mediates electron transfer between photosystem II (PSII) and photosystem I (PSI), cyclic electron flow around PSI, and state transitions. The polypeptide is Cytochrome f (Acaryochloris marina (strain MBIC 11017)).